The chain runs to 85 residues: Antibacterial factor-related peptide 1 (85 aa).

Residues Met1–Ser19 form the signal peptide.

In terms of tissue distribution, expressed in the pharynx and body wall muscle.

The protein resides in the secreted. This chain is Antibacterial factor-related peptide 1, found in Caenorhabditis elegans.